The following is a 207-amino-acid chain: Large ribosomal subunit protein uL4 (207 aa).

Positions 52–75 (KNRSAVRGGGKKPWRQKGTGRARQ) are disordered. Residues 60 to 71 (GGKKPWRQKGTG) are compositionally biased toward basic residues.

The protein belongs to the universal ribosomal protein uL4 family. In terms of assembly, part of the 50S ribosomal subunit.

One of the primary rRNA binding proteins, this protein initially binds near the 5'-end of the 23S rRNA. It is important during the early stages of 50S assembly. It makes multiple contacts with different domains of the 23S rRNA in the assembled 50S subunit and ribosome. Functionally, forms part of the polypeptide exit tunnel. In Limosilactobacillus fermentum (strain NBRC 3956 / LMG 18251) (Lactobacillus fermentum), this protein is Large ribosomal subunit protein uL4.